A 132-amino-acid chain; its full sequence is ATP synthase epsilon chain, chloroplastic (132 aa).

This sequence belongs to the ATPase epsilon chain family. As to quaternary structure, F-type ATPases have 2 components, CF(1) - the catalytic core - and CF(0) - the membrane proton channel. CF(1) has five subunits: alpha(3), beta(3), gamma(1), delta(1), epsilon(1). CF(0) has three main subunits: a, b and c.

It localises to the plastid. The protein localises to the chloroplast thylakoid membrane. Its function is as follows. Produces ATP from ADP in the presence of a proton gradient across the membrane. The chain is ATP synthase epsilon chain, chloroplastic from Pylaiella littoralis (Seaweed).